The following is an 896-amino-acid chain: DNA mismatch repair protein MutS (896 aa).

Position 599–606 (glycine 599–serine 606) interacts with ATP.

It belongs to the DNA mismatch repair MutS family.

In terms of biological role, this protein is involved in the repair of mismatches in DNA. It is possible that it carries out the mismatch recognition step. This protein has a weak ATPase activity. This is DNA mismatch repair protein MutS from Geobacillus kaustophilus (strain HTA426).